The primary structure comprises 2697 residues: Target of rapamycin homolog (2697 aa).

The disordered stretch occupies residues 1–25 (MLQQHGISFQMNADRQNKAATTSNR). HEAT repeat units follow at residues 235–272 (LRVN…IVSQ), 649–687 (QTIY…PFLA), 689–726 (LAQP…LNPA), 731–768 (RLRL…QSPK), 815–853 (KNLK…STAY), 863–900 (SLLD…YTHK), and 1073–1110 (KYTG…LTHC). In terms of domain architecture, FAT spans 1438-2153 (VLGRWAEQTK…IYALTVASRS (716 aa)). Disordered regions lie at residues 1945 to 1981 (TVIS…PQPA) and 2017 to 2039 (SNSS…PSNS). The segment covering 1969–1981 (SPPPPAQKSPQPA) has biased composition (pro residues). The segment covering 2030–2039 (PLSNDSPSNS) has biased composition (polar residues). The PI3K/PI4K catalytic domain occupies 2332–2647 (FSSKMNVITS…TTDSIMETIK (316 aa)). Residues 2338-2344 (VITSKQR) are G-loop. The segment at 2512 to 2520 (GLGDRHPSN) is catalytic loop. The segment at 2532–2557 (HIDFGDCFEVAMLREKFPERVPFRLT) is activation loop. The segment at 2615-2635 (DPKTRKDTGGRQNMAGAVLPS) is disordered. Positions 2665–2697 (EPLQVTEQLAMLTEQATSPLNLCQSYIGWCPFW) constitute an FATC domain.

It belongs to the PI3/PI4-kinase family. As to expression, ubiquitous. Expressed in all major tissues and organs, including the intestine, gonads and hypodermal cells. Expressed in neurons.

The protein localises to the nucleus. It catalyses the reaction L-seryl-[protein] + ATP = O-phospho-L-seryl-[protein] + ADP + H(+). It carries out the reaction L-threonyl-[protein] + ATP = O-phospho-L-threonyl-[protein] + ADP + H(+). In terms of biological role, serine/threonine-protein kinase that regulates the mRNA translation machinery, probably by modulating the activity of translation factors such as eIF-4G and eIF-2. It may have some protein kinase activity instead of lipid kinase activity. May play a role in P-granule degradation by autophagy in somatic cells during embryogenesis. Required, during larval development, for the establishment of the proper number of germline progenitors, probably upstream of rsks-1 and ife-1. Required for larval development. May act as a mediator of lifespan regulation by insulin signaling and nutrient sensing. The protein is Target of rapamycin homolog of Caenorhabditis elegans.